The primary structure comprises 300 residues: MKTGNQFNTVALVGRSNTPNIAEPLATLAACVAKRGFEVVFEAETAREIGITGYPALTPAEIGARADVAVVLGGDGTMLGIGRQLAPYKTPLIGINHGRLGFITDIAAADMQALVPVILSGKFEREERALLEARIMRDGEPIYHAIAFNDVVVNRSGFSGMVELRASVDGRYMYNQRSDGLIVATPTGSTAYALSSAGPILHPQLAGIVLVPIAPHALSNRPIVLPDDSKIAIQIVGGRDVNVNFDMQSFTALELNDTIEVRRSKHTVPFLHPIGYSYYATLRKKLHWNEHASNEDDKAS.

Asp75 functions as the Proton acceptor in the catalytic mechanism. Residues 75-76, 149-150, Arg177, Asp179, 190-195, Ala214, and Gln248 contribute to the NAD(+) site; these read DG, ND, and TAYALS.

This sequence belongs to the NAD kinase family. It depends on a divalent metal cation as a cofactor.

It localises to the cytoplasm. The catalysed reaction is NAD(+) + ATP = ADP + NADP(+) + H(+). Functionally, involved in the regulation of the intracellular balance of NAD and NADP, and is a key enzyme in the biosynthesis of NADP. Catalyzes specifically the phosphorylation on 2'-hydroxyl of the adenosine moiety of NAD to yield NADP. This is NAD kinase from Burkholderia lata (strain ATCC 17760 / DSM 23089 / LMG 22485 / NCIMB 9086 / R18194 / 383).